Here is a 426-residue protein sequence, read N- to C-terminus: MKSFTRNLRRFQTPRRNLHGISYTPKKVEGVSFAGRETPTATGSLSVVINAGSRYQPDAGVSHLLEKFAFKTTEERSALRITRESELLGGQLSTQITREHIILTARFLNEYLEYYARLLAEVVDATKFLPFQLTEEVLPTARIESELFREDILRVAMAKLHEKAFHRGIGNEVYLPASASPSISEIKDFASKAYVKSNFSVISSGPDVQKASDLCAKYFAVIPDGSPLKSAPTKISSGESRVYSKGTNYFCLGFPAPAASPELFVLSSILGGDAAVKWSHGNTLLAKAAGTASEYKATAVADLTPYSDASLLSVVISGSCPKAIKATASESFKALKSLSSNIPNDVVKSGIAMAKTKYLSAFEPVTLNAISASSLVSASKGSDAFISGFDKVTPASISKVVSSLLAKPASTVAVGNLDVLPYYDEL.

The transit peptide at 1–30 (MKSFTRNLRRFQTPRRNLHGISYTPKKVEG) directs the protein to the mitochondrion.

This sequence belongs to the peptidase M16 family. UQCRC2/QCR2 subfamily. Component of the ubiquinol-cytochrome c oxidoreductase (cytochrome b-c1 complex, complex III, CIII), a multisubunit enzyme composed of 3 respiratory subunits cytochrome b, cytochrome c1 and Rieske protein, 2 core protein subunits, and additional low-molecular weight protein subunits. The complex exists as an obligatory dimer and forms supercomplexes (SCs) in the inner mitochondrial membrane with cytochrome c oxidase (complex IV, CIV).

The protein resides in the mitochondrion inner membrane. In terms of biological role, component of the ubiquinol-cytochrome c oxidoreductase, a multisubunit transmembrane complex that is part of the mitochondrial electron transport chain which drives oxidative phosphorylation. The respiratory chain contains 3 multisubunit complexes succinate dehydrogenase (complex II, CII), ubiquinol-cytochrome c oxidoreductase (cytochrome b-c1 complex, complex III, CIII) and cytochrome c oxidase (complex IV, CIV), that cooperate to transfer electrons derived from NADH and succinate to molecular oxygen, creating an electrochemical gradient over the inner membrane that drives transmembrane transport and the ATP synthase. The cytochrome b-c1 complex catalyzes electron transfer from ubiquinol to cytochrome c, linking this redox reaction to translocation of protons across the mitochondrial inner membrane, with protons being carried across the membrane as hydrogens on the quinol. In the process called Q cycle, 2 protons are consumed from the matrix, 4 protons are released into the intermembrane space and 2 electrons are passed to cytochrome c. The sequence is that of Cytochrome b-c1 complex subunit 2, mitochondrial (qcr2) from Schizosaccharomyces pombe (strain 972 / ATCC 24843) (Fission yeast).